A 656-amino-acid chain; its full sequence is ATP-dependent zinc metalloprotease FtsH (656 aa).

Residues 1–10 (MGDNRWLKNS) lie on the Cytoplasmic side of the membrane. The helical transmembrane segment at 11-31 (FVYLIILVAALALFFQYLGPG) threads the bilayer. The Extracellular portion of the chain corresponds to 32–116 (ASQTEEKGIA…IVQPAPAWGG (85 aa)). Residues 117–137 (LLSIFTILLPTLLLIGFFVFF) traverse the membrane as a helical segment. Residues 138-656 (MRQAQGSNNQ…GLGGPSPLPA (519 aa)) lie on the Cytoplasmic side of the membrane. Position 209 to 216 (209 to 216 (GPPGTGKT)) interacts with ATP. Zn(2+) is bound at residue His432. Glu433 is an active-site residue. Zn(2+) contacts are provided by His436 and Asp511. The segment covering 622–632 (FSKSGSTTPNG) has biased composition (polar residues). The segment at 622 to 656 (FSKSGSTTPNGRTEDRPAQPDAPQMGLGGPSPLPA) is disordered.

It in the central section; belongs to the AAA ATPase family. This sequence in the C-terminal section; belongs to the peptidase M41 family. As to quaternary structure, homohexamer. Zn(2+) is required as a cofactor.

It localises to the cell membrane. Functionally, acts as a processive, ATP-dependent zinc metallopeptidase for both cytoplasmic and membrane proteins. Plays a role in the quality control of integral membrane proteins. The protein is ATP-dependent zinc metalloprotease FtsH of Chloroflexus aggregans (strain MD-66 / DSM 9485).